Reading from the N-terminus, the 53-residue chain is Kunitz-type trypsin inhibitor alpha chain (53 aa).

Residues 33–53 form a disordered region; the sequence is GWGLPRRTGDESCPLNVKAVR.

This sequence belongs to the protease inhibitor I3 (leguminous Kunitz-type inhibitor) family. Heterodimer of an alpha and a beta chain linked by a disulfide bond.

Functionally, inhibits trypsin with a Ki of 0.25 uM. Inhibits the trypsin-like proteases in midguts of larval H.armigera, S.exigua, and P.rapae. The chain is Kunitz-type trypsin inhibitor alpha chain from Albizia kalkora (Kalkora mimosa).